The primary structure comprises 102 residues: Large ribosomal subunit protein mL63 (102 aa).

The protein belongs to the mitochondrion-specific ribosomal protein mL63 family.

The protein resides in the mitochondrion. The chain is Large ribosomal subunit protein mL63 (Mrpl57) from Mus musculus (Mouse).